We begin with the raw amino-acid sequence, 251 residues long: 5'-nucleotidase SurE (251 aa).

A divalent metal cation is bound by residues Asp8, Asp9, Ser42, and Asn94.

It belongs to the SurE nucleotidase family. A divalent metal cation is required as a cofactor.

The protein resides in the cytoplasm. The catalysed reaction is a ribonucleoside 5'-phosphate + H2O = a ribonucleoside + phosphate. Functionally, nucleotidase that shows phosphatase activity on nucleoside 5'-monophosphates. The protein is 5'-nucleotidase SurE of Hydrogenovibrio crunogenus (strain DSM 25203 / XCL-2) (Thiomicrospira crunogena).